The sequence spans 212 residues: Protein FAM177A1 (212 aa).

At Met-1 the chain carries N-acetylmethionine. The segment covering 1–11 (MEGEPASREEG) has biased composition (basic and acidic residues). Positions 1–33 (MEGEPASREEGEAVNASGAAAASAFRESAQQMS) are disordered. Residues 13-29 (AVNASGAAAASAFRESA) are compositionally biased toward low complexity. Ser-69 is modified (phosphoserine). Thr-70 is modified (phosphothreonine). Residues 135–172 (IDEYYRMKKEEEEEEEENRMSEEAERQYQQNKLQADSV) adopt a coiled-coil conformation. Positions 146 to 179 (EEEEEENRMSEEAERQYQQNKLQADSVVQSDQPE) are disordered. Positions 161–179 (QYQQNKLQADSVVQSDQPE) are enriched in polar residues.

The protein belongs to the FAM177 family.

The sequence is that of Protein FAM177A1 (FAM177A1) from Bos taurus (Bovine).